Here is a 196-residue protein sequence, read N- to C-terminus: MRSIEVKGTARTIAERSSEQARALKEIRNNGGVPCVLYGGEEVVHFTVTNEGLRNLVYTPHIYVVDLVIDGKKVNAILKDIQFHPVKDTILHVDFYQIDEAKPIVMEVPVQLEGLAEGVKAGGKLALQMRKLKVKALYNIIPEKLTINVSHLGLGKTVKVGELSYEGLELLNAKEAVVCAVKLTRAARGAAAAAGK.

Belongs to the bacterial ribosomal protein bL25 family. CTC subfamily. As to quaternary structure, part of the 50S ribosomal subunit; part of the 5S rRNA/L5/L18/L25 subcomplex. Contacts the 5S rRNA. Binds to the 5S rRNA independently of L5 and L18.

This is one of the proteins that binds to the 5S RNA in the ribosome where it forms part of the central protuberance. This chain is Large ribosomal subunit protein bL25, found in Bacteroides fragilis (strain ATCC 25285 / DSM 2151 / CCUG 4856 / JCM 11019 / LMG 10263 / NCTC 9343 / Onslow / VPI 2553 / EN-2).